The following is a 127-amino-acid chain: Secreted RxLR effector protein 3 (127 aa).

An N-terminal signal peptide occupies residues 1–20 (MRPPLLLFLTVTVLVSCASA). Positions 30 to 48 (RSLRSIKTTTNDDAAEEER) match the RxLR-dEER motif.

It belongs to the RxLR effector family.

The protein localises to the secreted. Its subcellular location is the host cell. Secreted effector that partially suppresses elicitor-induced cell death in host and enhances virulence of P.parasitica. This chain is Secreted RxLR effector protein 3, found in Phytophthora nicotianae (Potato buckeye rot agent).